The primary structure comprises 787 residues: Endonuclease MutS2 (787 aa).

335-342 (GPNTGGKT) lines the ATP pocket. Residues 712-787 (LDLRGERYED…GLGNTVIELK (76 aa)) form the Smr domain.

It belongs to the DNA mismatch repair MutS family. MutS2 subfamily. In terms of assembly, homodimer. Binds to stalled ribosomes, contacting rRNA.

In terms of biological role, endonuclease that is involved in the suppression of homologous recombination and thus may have a key role in the control of bacterial genetic diversity. Functionally, acts as a ribosome collision sensor, splitting the ribosome into its 2 subunits. Detects stalled/collided 70S ribosomes which it binds and splits by an ATP-hydrolysis driven conformational change. Acts upstream of the ribosome quality control system (RQC), a ribosome-associated complex that mediates the extraction of incompletely synthesized nascent chains from stalled ribosomes and their subsequent degradation. Probably generates substrates for RQC. The chain is Endonuclease MutS2 from Shouchella clausii (strain KSM-K16) (Alkalihalobacillus clausii).